A 251-amino-acid chain; its full sequence is Cytochrome c oxidase subunit 2 (251 aa).

Residues 1–15 form the signal peptide; the sequence is MLNLLYNQIFNVILN. Residues 16–41 lie on the Mitochondrial intermembrane side of the membrane; sequence DVPTPYNTYFQDSATPNQEGILELHD. A helical membrane pass occupies residues 42–62; the sequence is NIMFYLLVILGLVSWLLFTIT. Residues 63-82 are Mitochondrial matrix-facing; it reads RTYSKNPIAYKYIKHGQTIE. The chain crosses the membrane as a helical span at residues 83 to 103; it reads IIWTIFPAVILLIIAFPSFIL. The Mitochondrial intermembrane segment spans residues 104-251; that stretch reads LYLCDEVISP…PAFLEWLNEQ (148 aa). Residues His-186, Cys-221, Glu-223, Cys-225, His-229, and Met-232 each coordinate Cu cation. Glu-223 contributes to the Mg(2+) binding site.

It belongs to the cytochrome c oxidase subunit 2 family. In terms of assembly, component of the cytochrome c oxidase (complex IV, CIV), a multisubunit enzyme composed of a catalytic core of 3 subunits and several supernumerary subunits. The complex exists as a monomer or a dimer and forms supercomplexes (SCs) in the inner mitochondrial membrane with ubiquinol-cytochrome c oxidoreductase (cytochrome b-c1 complex, complex III, CIII). It depends on Cu cation as a cofactor. The signal sequence of COX2 is processed by IMP1.

The protein resides in the mitochondrion inner membrane. It carries out the reaction 4 Fe(II)-[cytochrome c] + O2 + 8 H(+)(in) = 4 Fe(III)-[cytochrome c] + 2 H2O + 4 H(+)(out). Functionally, component of the cytochrome c oxidase, the last enzyme in the mitochondrial electron transport chain which drives oxidative phosphorylation. The respiratory chain contains 3 multisubunit complexes succinate dehydrogenase (complex II, CII), ubiquinol-cytochrome c oxidoreductase (cytochrome b-c1 complex, complex III, CIII) and cytochrome c oxidase (complex IV, CIV), that cooperate to transfer electrons derived from NADH and succinate to molecular oxygen, creating an electrochemical gradient over the inner membrane that drives transmembrane transport and the ATP synthase. Cytochrome c oxidase is the component of the respiratory chain that catalyzes the reduction of oxygen to water. Electrons originating from reduced cytochrome c in the intermembrane space (IMS) are transferred via the dinuclear copper A center (CU(A)) of subunit 2 and heme A of subunit 1 to the active site in subunit 1, a binuclear center (BNC) formed by heme A3 and copper B (CU(B)). The BNC reduces molecular oxygen to 2 water molecules using 4 electrons from cytochrome c in the IMS and 4 protons from the mitochondrial matrix. In Lachancea thermotolerans (strain ATCC 56472 / CBS 6340 / NRRL Y-8284) (Yeast), this protein is Cytochrome c oxidase subunit 2 (COX2).